Here is a 464-residue protein sequence, read N- to C-terminus: Non-neuronal cytoplasmic intermediate filament protein (464 aa).

The segment covering 1–14 has biased composition (polar residues); that stretch reads MSTQTKKVTRTIIT. Residues 1 to 59 form a disordered region; that stretch reads MSTQTKKVTRTIITSSSGGGGGGGGGRASYSSSGRFSGGGGRMRAGGVTSRRSVGSSYS. Positions 1-101 are head; sequence MSTQTKKVTR…RMTRAHEKQE (101 aa). Residues 17-27 are compositionally biased toward gly residues; it reads SGGGGGGGGGR. The span at 45 to 59 shows a compositional bias: low complexity; the sequence is AGGVTSRRSVGSSYS. An IF rod domain is found at 98–413; sequence EKQELSHLND…KLLEGEEIRL (316 aa). Residues 102–133 are coil 1A; the sequence is LSHLNDRFASYIDKVRYLQERNSKLEAQIKIQ. The tract at residues 134-144 is linker 1; it reads ESREAPNIKDL. The interval 145–237 is coil 1B; that stretch reads YEKELRDLRA…FLKRVHDEEI (93 aa). The segment at 238 to 264 is linker 2; sequence RQLQDQLNESLTIVEVDSRAASTFAPG. The coil 2 stretch occupies residues 265–413; that stretch reads PDLTEALREI…KLLEGEEIRL (149 aa). The interval 414–464 is tail; it reads FGESKEGVQQTSSSSSSSYQYSMKSGSGGGGGGSSSGKQQVTVSVSSGEEK. Residues 415-464 form a disordered region; the sequence is GESKEGVQQTSSSSSSSYQYSMKSGSGGGGGGSSSGKQQVTVSVSSGEEK. Residues 420–438 show a composition bias toward low complexity; that stretch reads GVQQTSSSSSSSYQYSMKS. A compositionally biased stretch (gly residues) spans 439–448; that stretch reads GSGGGGGGSS. The segment covering 449–464 has biased composition (low complexity); sequence SGKQQVTVSVSSGEEK.

Belongs to the intermediate filament family. In terms of assembly, can form homopolymers.

It is found in the cytoplasm. The sequence is that of Non-neuronal cytoplasmic intermediate filament protein from Branchiostoma lanceolatum (Common lancelet).